The sequence spans 318 residues: NADH-ubiquinone oxidoreductase chain 1 (318 aa).

The next 8 helical transmembrane spans lie at 2–22, 68–88, 102–122, 146–166, 171–191, 217–237, 253–273, and 294–314; these read FLMN…FLTL, ISLF…MWIP, ILFI…SGWA, LAII…SSLI, FTWL…STLA, AGPF…MNAL, EMFT…FLWI, and LPLT…MACI.

Belongs to the complex I subunit 1 family.

It localises to the mitochondrion inner membrane. The enzyme catalyses a ubiquinone + NADH + 5 H(+)(in) = a ubiquinol + NAD(+) + 4 H(+)(out). In terms of biological role, core subunit of the mitochondrial membrane respiratory chain NADH dehydrogenase (Complex I) that is believed to belong to the minimal assembly required for catalysis. Complex I functions in the transfer of electrons from NADH to the respiratory chain. The immediate electron acceptor for the enzyme is believed to be ubiquinone. This is NADH-ubiquinone oxidoreductase chain 1 (MT-ND1) from Tamias sibiricus (Siberian chipmunk).